Here is an 87-residue protein sequence, read N- to C-terminus: Large ribosomal subunit protein bL27 (87 aa).

Residues 1–24 (MAHKKGTGSTRNGRDSRSQRLGVK) form a disordered region.

Belongs to the bacterial ribosomal protein bL27 family.

The protein is Large ribosomal subunit protein bL27 of Crocosphaera subtropica (strain ATCC 51142 / BH68) (Cyanothece sp. (strain ATCC 51142)).